The sequence spans 251 residues: Ubiquitin-conjugating enzyme E2 22 (251 aa).

Positions 10–156 constitute a UBC core domain; it reads NVIKQLAKEL…ARLYTGIHAK (147 aa). Cys94 (glycyl thioester intermediate) is an active-site residue. A compositionally biased stretch (basic and acidic residues) spans 230–240; it reads GLAKVQADKKK. Positions 230 to 251 are disordered; sequence GLAKVQADKKKVDARKKSLKRL. A coiled-coil region spans residues 230–251; sequence GLAKVQADKKKVDARKKSLKRL. A compositionally biased stretch (basic residues) spans 241-251; that stretch reads VDARKKSLKRL.

Belongs to the ubiquitin-conjugating enzyme family. Self-ubiquitinated. In terms of tissue distribution, expressed in seeds, pistils, siliques, hypocotyls and leaves.

The catalysed reaction is S-ubiquitinyl-[E1 ubiquitin-activating enzyme]-L-cysteine + [E2 ubiquitin-conjugating enzyme]-L-cysteine = [E1 ubiquitin-activating enzyme]-L-cysteine + S-ubiquitinyl-[E2 ubiquitin-conjugating enzyme]-L-cysteine.. It functions in the pathway protein modification; protein ubiquitination. Accepts the ubiquitin from the E1 complex and catalyzes its covalent attachment to other proteins. This Arabidopsis thaliana (Mouse-ear cress) protein is Ubiquitin-conjugating enzyme E2 22 (UBC22).